Consider the following 245-residue polypeptide: Ribonuclease 3 (245 aa).

Positions phenylalanine 19 to glycine 148 constitute an RNase III domain. Position 61 (glutamate 61) interacts with Mg(2+). The active site involves aspartate 65. 2 residues coordinate Mg(2+): aspartate 134 and glutamate 137. Glutamate 137 is an active-site residue. Residues aspartate 174–glutamate 243 form the DRBM domain.

It belongs to the ribonuclease III family. In terms of assembly, homodimer. It depends on Mg(2+) as a cofactor.

Its subcellular location is the cytoplasm. The enzyme catalyses Endonucleolytic cleavage to 5'-phosphomonoester.. Its function is as follows. Digests double-stranded RNA. Involved in the processing of primary rRNA transcript to yield the immediate precursors to the large and small rRNAs (23S and 16S). Processes some mRNAs, and tRNAs when they are encoded in the rRNA operon. Processes pre-crRNA and tracrRNA of type II CRISPR loci if present in the organism. The polypeptide is Ribonuclease 3 (Bacillus cereus (strain 03BB102)).